The following is a 147-amino-acid chain: Thyrotropin subunit beta (147 aa).

A signal peptide spans 1–20; that stretch reads MELSVAMYGLLCLLFSQAVP. 6 cysteine pairs are disulfide-bonded: Cys22-Cys72, Cys36-Cys87, Cys39-Cys127, Cys47-Cys103, Cys51-Cys105, and Cys108-Cys115. Asn43 carries an N-linked (GlcNAc...) asparagine glycan.

Belongs to the glycoprotein hormones subunit beta family. In terms of assembly, heterodimer of a common alpha chain and a unique beta chain which confers biological specificity to thyrotropin, lutropin, follitropin and gonadotropin. In terms of tissue distribution, pituitary gland. Higher levels seen in immature fishes than the mature fishes.

It localises to the secreted. Its function is as follows. Indispensable for the control of thyroid structure and metabolism. May play some role in the biological processes of the immature fishes. The chain is Thyrotropin subunit beta (tshb) from Oncorhynchus mykiss (Rainbow trout).